We begin with the raw amino-acid sequence, 3174 residues long: Probable polyketide synthase 15 (3174 aa).

One can recognise a Ketosynthase family 3 (KS3) domain in the interval 23–474 (NDEIAIVGIG…GSNCCLILSQ (452 aa)). Catalysis depends on for beta-ketoacyl synthase activity residues Cys194, His342, and His397. Coiled coils occupy residues 472–509 (LSQF…QYDN) and 574–604 (EFNK…RVQT). The segment covering 578-599 (QKQSQKEKEKEKEREGEEKEQL) has biased composition (basic and acidic residues). Residues 578–601 (QKQSQKEKEKEKEREGEEKEQLNR) form a disordered region. The interval 707 to 740 (GIEASFIVGHSLGEIPAAYCSGMITLDTLCYLIY) is acyl/malonyl transferase. Ser717 functions as the For acyl/malonyl transferase activity in the catalytic mechanism. The interval 1034–1156 (IDILGLSNYD…ANFQLLNNNN (123 aa)) is N-terminal hotdog fold. Positions 1034–1332 (IDILGLSNYD…CKSLKIVKNP (299 aa)) constitute a PKS/mFAS DH domain. The active-site Proton acceptor; for dehydratase activity is His1068. Positions 1182–1332 (NKTKISRIDL…CKSLKIVKNP (151 aa)) are C-terminal hotdog fold. Asp1241 (proton donor; for dehydratase activity) is an active-site residue. A coiled-coil region spans residues 1758 to 1793 (LEININNNNNNNNNNNNNNNNNNNNNNNNNNYEDNV). The Carrier domain occupies 2653–2730 (VDSLNIKDIF…LVIKIIITAI (78 aa)). Ser2690 bears the O-(pantetheine 4'-phosphoryl)serine mark.

Requires pantetheine 4'-phosphate as cofactor.

Functionally, probable polyketide synthase. This chain is Probable polyketide synthase 15 (pks15), found in Dictyostelium discoideum (Social amoeba).